The sequence spans 131 residues: Small ribosomal subunit protein uS11 (131 aa).

The protein belongs to the universal ribosomal protein uS11 family. In terms of assembly, part of the 30S ribosomal subunit. Interacts with proteins S7 and S18. Binds to IF-3.

Functionally, located on the platform of the 30S subunit, it bridges several disparate RNA helices of the 16S rRNA. Forms part of the Shine-Dalgarno cleft in the 70S ribosome. The chain is Small ribosomal subunit protein uS11 from Helicobacter acinonychis (strain Sheeba).